Consider the following 450-residue polypeptide: Ceramide glucosyltransferase (450 aa).

Residues 1–8 lie on the Lumenal side of the membrane; that stretch reads MSDSGTLS. A helical transmembrane segment spans residues 9–29; that stretch reads LIGGIVFLVLWVVVWSICLLG. The Cytoplasmic portion of the chain corresponds to 30–337; the sequence is WRTARIRYAH…IRVRKKMTLA (308 aa). A short sequence motif (D1) is located at residue D96. D148 is a short sequence motif (D2). Residue D286 is a short sequence motif, D3. D286 (proton acceptor) is an active-site residue. A (Q/R)XXRW motif is present at residues 323–327; sequence RRVRW. The helical transmembrane segment at 338–358 threads the bilayer; it reads ATLLEPLTESIISGLYGAWAI. The Lumenal portion of the chain corresponds to 359 to 361; it reads SRL. Residues 362 to 382 form a helical membrane-spanning segment; the sequence is LGGNILPLFLLHMAAWISVDI. At 383–401 the chain is on the cytoplasmic side; it reads STKRALETNIKGIGPPESK. The chain crosses the membrane as a helical span at residues 402–422; that stretch reads VTFLMAWAARECLALPIWMLA. Topologically, residues 423–450 are lumenal; that stretch reads MTSSEVVWRGQKYKIIASGEAIRLGDRN.

It belongs to the glycosyltransferase 2 family.

Its subcellular location is the golgi apparatus membrane. It carries out the reaction an N-acylsphing-4-enine + UDP-alpha-D-glucose = a beta-D-glucosyl-(1&lt;-&gt;1')-N-acylsphing-4-enine + UDP + H(+). The protein operates within lipid metabolism; sphingolipid metabolism. Catalyzes the final step in the biosynthesis of the membrane lipid glucosylceramide (GluCer), the transfer of glucose to ceramide. Glucosylceramides play important roles in growth, differentiation and pathogenicity. Essential factor in determining the success of fungal infection by regulating survival of yeast cells during the initial colonization of the host lung. The chain is Ceramide glucosyltransferase from Cryptococcus neoformans var. grubii serotype A (strain H99 / ATCC 208821 / CBS 10515 / FGSC 9487) (Filobasidiella neoformans var. grubii).